The chain runs to 42 residues: Photosystem I reaction center subunit IX (42 aa).

Residues 7-27 (YLSTAPVLAALSLGFLAGLLI) form a helical membrane-spanning segment.

Belongs to the PsaJ family.

It localises to the plastid. The protein localises to the chloroplast thylakoid membrane. In terms of biological role, may help in the organization of the PsaE and PsaF subunits. In Cryptomeria japonica (Japanese cedar), this protein is Photosystem I reaction center subunit IX.